The chain runs to 145 residues: uncharacterized protein (145 aa).

The segment at 1–49 (MLSIFKNLLGTSEEDGTTQEANSKDTKGLKEERKRKKRKNKYKIPPGHT) is disordered. The span at 22-32 (NSKDTKGLKEE) shows a compositional bias: basic and acidic residues. The span at 33 to 42 (RKRKKRKNKY) shows a compositional bias: basic residues. Serine 68 bears the Phosphoserine mark. Residues 69-145 (PISVTAEELA…LKTSFVGYLV (77 aa)) form the Cytochrome b5 heme-binding domain. Heme-binding residues include histidine 104 and histidine 127.

The protein belongs to the cytochrome b5 family.

The protein localises to the cytoplasm. This is an uncharacterized protein from Schizosaccharomyces pombe (strain 972 / ATCC 24843) (Fission yeast).